The sequence spans 148 residues: Large ribosomal subunit protein bL9 (148 aa).

It belongs to the bacterial ribosomal protein bL9 family.

Binds to the 23S rRNA. The protein is Large ribosomal subunit protein bL9 of Ectopseudomonas mendocina (strain ymp) (Pseudomonas mendocina).